The sequence spans 193 residues: Phosphoheptose isomerase (193 aa).

In terms of domain architecture, SIS spans 37–193 (LADSFKVGGK…QLIEKEMVKA (157 aa)). Residue 52 to 54 (NGG) participates in substrate binding. His61 and Glu65 together coordinate Zn(2+). Substrate is bound by residues Glu65, 93–94 (ND), 119–121 (STS), Ser124, and Gln172. Gln172 and His180 together coordinate Zn(2+).

It belongs to the SIS family. GmhA subfamily. As to quaternary structure, homotetramer. Zn(2+) serves as cofactor.

The protein localises to the cytoplasm. The enzyme catalyses 2 D-sedoheptulose 7-phosphate = D-glycero-alpha-D-manno-heptose 7-phosphate + D-glycero-beta-D-manno-heptose 7-phosphate. It functions in the pathway carbohydrate biosynthesis; D-glycero-D-manno-heptose 7-phosphate biosynthesis; D-glycero-alpha-D-manno-heptose 7-phosphate and D-glycero-beta-D-manno-heptose 7-phosphate from sedoheptulose 7-phosphate: step 1/1. It participates in bacterial outer membrane biogenesis; LPS core biosynthesis. In terms of biological role, catalyzes the isomerization of sedoheptulose 7-phosphate in D-glycero-D-manno-heptose 7-phosphate. This is Phosphoheptose isomerase from Photorhabdus laumondii subsp. laumondii (strain DSM 15139 / CIP 105565 / TT01) (Photorhabdus luminescens subsp. laumondii).